The sequence spans 430 residues: Cell wall protein ECM33 (430 aa).

The first 19 residues, 1–19 (MQFKNALTATAILSASALA), serve as a signal peptide directing secretion. N-linked (GlcNAc...) asparagine glycans are attached at residues Asn22, Asn57, Asn83, Asn197, Asn210, Asn228, Asn235, Asn242, Asn268, Asn280, Asn305, and Asn329. Position 340 is a phosphoserine (Ser340). Positions 362 to 402 (LSSTSTESSKSSATSSASSSGDASNAQASVSASASSSSSSS) are enriched in low complexity. A disordered region spans residues 362–411 (LSSTSTESSKSSATSSASSSGDASNAQASVSASASSSSSSSKKSKGAAPE). A lipid anchor (GPI-anchor amidated glycine) is attached at Gly407. Residues 408 to 430 (AAPELVPATSFMGVVAAVAVALL) constitute a propeptide, removed in mature form.

It belongs to the SPS2 family. In terms of processing, the GPI-anchor is attached to the protein in the endoplasmic reticulum and serves to target the protein to the cell surface. There, the glucosamine-inositol phospholipid moiety is cleaved off and the GPI-modified mannoprotein is covalently attached via its lipidless GPI glycan remnant to the 1,6-beta-glucan of the outer cell wall layer.

Its subcellular location is the cell membrane. The protein resides in the secreted. It localises to the cell wall. In terms of biological role, required for proper cell wall integrity and for the correct assembly of the mannoprotein outer layer of the cell wall. Important for apical bud growth. In Saccharomyces cerevisiae (strain JAY291) (Baker's yeast), this protein is Cell wall protein ECM33 (ECM33).